Consider the following 490-residue polypeptide: 4-hydroxyphenylacetaldehyde synthase (490 aa).

L-phenylalanine is bound by residues proline 97, histidine 198, and histidine 313. An N6-(pyridoxal phosphate)lysine modification is found at lysine 314. L-phenylalanine is bound at residue phenylalanine 343.

This sequence belongs to the group II decarboxylase family. In terms of assembly, homodimer. It depends on pyridoxal 5'-phosphate as a cofactor.

The enzyme catalyses L-tyrosine + O2 + H2O + H(+) = (4-hydroxyphenyl)acetaldehyde + H2O2 + NH4(+) + CO2. Functionally, catalyzes the production of 4-hydroxyphenylacetaldehyde (HPAA) directly from L-tyrosine, tyramine not being formed as an intermediate. The sequence is that of 4-hydroxyphenylacetaldehyde synthase from Rhodiola rosea (Roseroot).